Reading from the N-terminus, the 148-residue chain is SsrA-binding protein (148 aa).

Basic and acidic residues predominate over residues 129–142 (ETEKKRDWEREKAR). The disordered stretch occupies residues 129-148 (ETEKKRDWEREKARIMRAGT).

Belongs to the SmpB family.

It is found in the cytoplasm. Required for rescue of stalled ribosomes mediated by trans-translation. Binds to transfer-messenger RNA (tmRNA), required for stable association of tmRNA with ribosomes. tmRNA and SmpB together mimic tRNA shape, replacing the anticodon stem-loop with SmpB. tmRNA is encoded by the ssrA gene; the 2 termini fold to resemble tRNA(Ala) and it encodes a 'tag peptide', a short internal open reading frame. During trans-translation Ala-aminoacylated tmRNA acts like a tRNA, entering the A-site of stalled ribosomes, displacing the stalled mRNA. The ribosome then switches to translate the ORF on the tmRNA; the nascent peptide is terminated with the 'tag peptide' encoded by the tmRNA and targeted for degradation. The ribosome is freed to recommence translation, which seems to be the essential function of trans-translation. The protein is SsrA-binding protein of Burkholderia lata (strain ATCC 17760 / DSM 23089 / LMG 22485 / NCIMB 9086 / R18194 / 383).